The primary structure comprises 65 residues: Large ribosomal subunit protein bL35 (65 aa).

The span at 1-16 (MVPKQKTHSGAKKRFK) shows a compositional bias: basic residues. The tract at residues 1 to 39 (MVPKQKTHSGAKKRFKLTGSGSVSRARAGMRHNFEHRSS) is disordered.

It belongs to the bacterial ribosomal protein bL35 family.

The chain is Large ribosomal subunit protein bL35 from Tropheryma whipplei (strain TW08/27) (Whipple's bacillus).